A 217-amino-acid polypeptide reads, in one-letter code: Small ribosomal subunit protein uS3c (217 aa).

One can recognise a KH type-2 domain in the interval 47 to 119; sequence VRTHIKSSSN…KLHIAIEKVA (73 aa).

The protein belongs to the universal ribosomal protein uS3 family. Part of the 30S ribosomal subunit.

Its subcellular location is the plastid. It localises to the chloroplast. This is Small ribosomal subunit protein uS3c (rps3) from Pinus koraiensis (Korean pine).